A 259-amino-acid polypeptide reads, in one-letter code: tRNA pseudouridine synthase A (259 aa).

Asp51 serves as the catalytic Nucleophile. Tyr109 serves as a coordination point for substrate.

The protein belongs to the tRNA pseudouridine synthase TruA family. Homodimer.

It carries out the reaction uridine(38/39/40) in tRNA = pseudouridine(38/39/40) in tRNA. In terms of biological role, formation of pseudouridine at positions 38, 39 and 40 in the anticodon stem and loop of transfer RNAs. In Nitrosococcus oceani (strain ATCC 19707 / BCRC 17464 / JCM 30415 / NCIMB 11848 / C-107), this protein is tRNA pseudouridine synthase A.